The primary structure comprises 767 residues: MVQSSVLGFPRIGGQRELKKITEAYWSGKATVEELLAKGKELREHNWKLQQKAGVDIIPSNDFSYYDQVLDLSLLFNAIPERYTKFDLAPIDVLFAMGRGLQKKATETQAAVDVTALEMVKWFDSNYHYVRPTFSHSTEFKLNTAAGIKPVDEFNEAKALGVQTRPVILGPVSYLYLGKADKDSLDLEPISLLPKILPVYKELLQKLKEAGAEQVQIDEPVLVLDLPEAVQSKFKEAYDALVGADVPELILTTYFGDVRPNLKAIENLPVAGFHFDFVRVPEQLDEVASILKDGQTLSAGVVDGRNIWKTDFAKASAVVQKAIEKVGKDKVVVATSSSLLHTPVDLESETKLDAVIKDWFSFATQKLDEVVVIAKNVSGEDVSKQLEANAASIKARSESSITNDPKVQERLTTINEALATRKAAFPERLTEQKAKYNLPLFPTTTIGSFPQTKDIRINRNKFAKGQITAEEYEAFINKEIETVVRFQEEIGLDVLVHGEPERNDMVQYFGEQLNGFAFTTNGWVQSYGSRYVRPPIIVGDVSRPKAMTVKESVYAQSITSKPMKGMLTGPVTILRWSFPRDDVSGKIQALQLGLALRDEVNDLEGAGITVIQVDEPAIREGLPLRAGKERSDYLNWAAQSFRVATSGVENSTQIHSHFCYSDLDPNHIKALDADVVSIEFSKKDDPNYIQEFSEYPNHIGLGLFDIHSPRIPSKQEFVSRIEEILKVYPASKFWVNPDCGLKTRGWPEVKESLTNMVEAAKEFRAKY.

Residues Lys-19 and Asn-126 each coordinate 5-methyltetrahydropteroyltri-L-glutamate. L-homocysteine is bound by residues 446–448 and Glu-499; that span reads IGS. L-methionine is bound by residues 446–448 and Glu-499; that span reads IGS. Residues Asp-504, Tyr-527, 530–531, and Trp-576 each bind 5-methyltetrahydropteroyltri-L-glutamate; that span reads RY. Asp-614 contributes to the L-homocysteine binding site. Asp-614 is a binding site for L-methionine. Positions 657, 659, and 679 each coordinate Zn(2+). His-707 (proton donor) is an active-site residue. Cys-739 contributes to the Zn(2+) binding site.

Belongs to the vitamin-B12 independent methionine synthase family. Requires Zn(2+) as cofactor.

The enzyme catalyses 5-methyltetrahydropteroyltri-L-glutamate + L-homocysteine = tetrahydropteroyltri-L-glutamate + L-methionine. Its pathway is amino-acid biosynthesis; L-methionine biosynthesis via de novo pathway; L-methionine from L-homocysteine (MetE route): step 1/1. Its activity is regulated as follows. Inhibited weakly by methotrexate. In terms of biological role, catalyzes the transfer of a methyl group from 5-methyltetrahydrofolate to homocysteine resulting in methionine formation. The protein is 5-methyltetrahydropteroyltriglutamate--homocysteine methyltransferase of Candida albicans (strain SC5314 / ATCC MYA-2876) (Yeast).